Here is a 197-residue protein sequence, read N- to C-terminus: Holliday junction branch migration complex subunit RuvA (197 aa).

Residues 1–63 form a domain I region; the sequence is MISSLRGEVL…EDSMTLYGFV (63 aa). A domain II region spans residues 64 to 139; it reads DGETRDLFLT…KVGPAGSAAT (76 aa). Residues 139 to 143 are flexible linker; it reads TAPAV. Positions 144–197 are domain III; that stretch reads NGHTVRAPVVEALVGLGFAAKQAEEATDKVLAGDGEATTSSALRAALSLLGKAR.

The protein belongs to the RuvA family. As to quaternary structure, homotetramer. Forms an RuvA(8)-RuvB(12)-Holliday junction (HJ) complex. HJ DNA is sandwiched between 2 RuvA tetramers; dsDNA enters through RuvA and exits via RuvB. An RuvB hexamer assembles on each DNA strand where it exits the tetramer. Each RuvB hexamer is contacted by two RuvA subunits (via domain III) on 2 adjacent RuvB subunits; this complex drives branch migration. In the full resolvosome a probable DNA-RuvA(4)-RuvB(12)-RuvC(2) complex forms which resolves the HJ.

The protein localises to the cytoplasm. Functionally, the RuvA-RuvB-RuvC complex processes Holliday junction (HJ) DNA during genetic recombination and DNA repair, while the RuvA-RuvB complex plays an important role in the rescue of blocked DNA replication forks via replication fork reversal (RFR). RuvA specifically binds to HJ cruciform DNA, conferring on it an open structure. The RuvB hexamer acts as an ATP-dependent pump, pulling dsDNA into and through the RuvAB complex. HJ branch migration allows RuvC to scan DNA until it finds its consensus sequence, where it cleaves and resolves the cruciform DNA. The sequence is that of Holliday junction branch migration complex subunit RuvA from Mycobacterium marinum (strain ATCC BAA-535 / M).